The chain runs to 318 residues: Ribosomal protein L11 methyltransferase (318 aa).

Threonine 159, glycine 180, aspartate 202, and asparagine 253 together coordinate S-adenosyl-L-methionine.

It belongs to the methyltransferase superfamily. PrmA family.

The protein resides in the cytoplasm. The enzyme catalyses L-lysyl-[protein] + 3 S-adenosyl-L-methionine = N(6),N(6),N(6)-trimethyl-L-lysyl-[protein] + 3 S-adenosyl-L-homocysteine + 3 H(+). Its function is as follows. Methylates ribosomal protein L11. This is Ribosomal protein L11 methyltransferase from Lachnospira eligens (strain ATCC 27750 / DSM 3376 / VPI C15-48 / C15-B4) (Eubacterium eligens).